The primary structure comprises 196 residues: Peptidyl-tRNA hydrolase (196 aa).

Tyr18 lines the tRNA pocket. The Proton acceptor role is filled by His23. Residues Phe69, Asn71, and Asn117 each contribute to the tRNA site.

The protein belongs to the PTH family. As to quaternary structure, monomer.

It is found in the cytoplasm. The enzyme catalyses an N-acyl-L-alpha-aminoacyl-tRNA + H2O = an N-acyl-L-amino acid + a tRNA + H(+). Functionally, hydrolyzes ribosome-free peptidyl-tRNAs (with 1 or more amino acids incorporated), which drop off the ribosome during protein synthesis, or as a result of ribosome stalling. Its function is as follows. Catalyzes the release of premature peptidyl moieties from peptidyl-tRNA molecules trapped in stalled 50S ribosomal subunits, and thus maintains levels of free tRNAs and 50S ribosomes. The polypeptide is Peptidyl-tRNA hydrolase (Vibrio parahaemolyticus serotype O3:K6 (strain RIMD 2210633)).